The following is a 29-amino-acid chain: Photosystem I reaction center subunit XII (29 aa).

A helical membrane pass occupies residues 7-26 (IFVALILALFSFVLAIRLGT).

This sequence belongs to the PsaM family.

The protein resides in the plastid. It localises to the chloroplast thylakoid membrane. This Guillardia theta (Cryptophyte) protein is Photosystem I reaction center subunit XII.